The primary structure comprises 86 residues: Small ribosomal subunit protein uS17 (86 aa).

It belongs to the universal ribosomal protein uS17 family. Part of the 30S ribosomal subunit.

Functionally, one of the primary rRNA binding proteins, it binds specifically to the 5'-end of 16S ribosomal RNA. This chain is Small ribosomal subunit protein uS17, found in Helicobacter pylori (strain P12).